A 354-amino-acid chain; its full sequence is Guanine nucleotide-binding protein alpha-3 subunit (354 aa).

A lipid anchor (N-myristoyl glycine) is attached at Gly-2. A lipid anchor (S-palmitoyl cysteine) is attached at Cys-4. Residues 33 to 354 form the G-alpha domain; sequence KECKILLLGS…TNALKDSGIL (322 aa). A G1 motif region spans residues 36–49; it reads KILLLGSGESGKST. Residues 41–48, 177–183, 202–206, 271–274, and Ala-326 contribute to the GTP site; these read GSGESGKS, LRARSKT, DVGGQ, and NKID. Positions 48 and 183 each coordinate Mg(2+). The interval 175-183 is G2 motif; it reads DVLRARSKT. Residues 198–207 form a G3 motif region; it reads IHLFDVGGQR. The segment at 267-274 is G4 motif; the sequence is ILFLNKID. A G5 motif region spans residues 324–329; it reads TQATDT.

Belongs to the G-alpha family. G proteins are composed of 3 units; alpha, beta and gamma. The alpha chain contains the guanine nucleotide binding site.

Its function is as follows. Guanine nucleotide-binding proteins (G proteins) are involved as modulators or transducers in various transmembrane signaling systems. GPA3 plays an active role in transmission of the pheromone signal. This chain is Guanine nucleotide-binding protein alpha-3 subunit (GPA3), found in Mycosarcoma maydis (Corn smut fungus).